The primary structure comprises 84 residues: Large ribosomal subunit protein bL28 (84 aa).

This sequence belongs to the bacterial ribosomal protein bL28 family.

The chain is Large ribosomal subunit protein bL28 from Clostridium perfringens (strain 13 / Type A).